The chain runs to 275 residues: MLLHLILILKSFLPKRNLAFRYDIVALSLTRKILLKHQPPENVFAALYIDSLHGGRHQIMPGFCKLSCPTLDVGPGLGRFAASHFSERVSQDRQAQGRERRSVLLPQERRGSSGRQPLYSLLPHRPKREGVIGAALCYTSASHSLSPAALLPPVGRGKDRRCGRQVGAAGLLRHVGRRRQFAQLTRGPLGLPCALLEPLPLDPHLLDKGRDVGVGGCHDHQGQEDGLLLHGGPEPVLGPQGVIGPAYGRPHANVHALRHELQHGPLGDPPRLRSG.

Over residues 88–111 the composition is skewed to basic and acidic residues; it reads RVSQDRQAQGRERRSVLLPQERRG. The segment at 88-120 is disordered; that stretch reads RVSQDRQAQGRERRSVLLPQERRGSSGRQPLYS.

It belongs to the 'phage' integrase family.

Integrase-recombinase proteins are responsible for catalyzing strand exchange between DNA molecules and play an important role in the DNA replication. Its function is as follows. May be required for the formation of concatameric complex replicative intermediates and/or their resolution before encapsidation. This Dryophytes versicolor (chameleon treefrog) protein is Integrase homolog (INT).